The primary structure comprises 141 residues: Large ribosomal subunit protein uL11 (141 aa).

The protein belongs to the universal ribosomal protein uL11 family. As to quaternary structure, part of the ribosomal stalk of the 50S ribosomal subunit. Interacts with L10 and the large rRNA to form the base of the stalk. L10 forms an elongated spine to which L12 dimers bind in a sequential fashion forming a multimeric L10(L12)X complex. In terms of processing, one or more lysine residues are methylated.

Its function is as follows. Forms part of the ribosomal stalk which helps the ribosome interact with GTP-bound translation factors. The chain is Large ribosomal subunit protein uL11 from Geobacter sulfurreducens (strain ATCC 51573 / DSM 12127 / PCA).